A 362-amino-acid chain; its full sequence is Protein MGF 360-2L (362 aa).

This sequence belongs to the asfivirus MGF 360 family.

Functionally, plays a role in virus cell tropism, and may be required for efficient virus replication in macrophages. The chain is Protein MGF 360-2L from African swine fever virus (strain Badajoz 1971 Vero-adapted) (Ba71V).